A 3461-amino-acid chain; its full sequence is MERGCWAPRALVLAVLLLLATLRARAATGYYPRFSPFFFLCTHHGELEGDGEQGEVLISLHIAGNPTYYVPGQEYHVTISTSTFFDGLLVTGLYTSTSIQSSQSIGGSSAFGFGIMSDHQFGNQFMCSVVASHVSHLPTTNLSFVWIAPPAGTGCVNFMATATHRGQVIFKDALAQQLCEQGAPTEATAYSHLAEIHSDSVILRDDFDSYQQLELNPNIWVECSNCEMGEQCGTIMHGNAVTFCEPYGPRELTTTCLNTTTASVLQFSIGSGSCRFSYSDPSITVSYAKNNTADWIQLEKIRAPSNVSTVIHILYLPEEAKGESVQFQWKQDSLRVGEVYEACWALDNILVINSAHREVVLEDNLDPVDTGNWLFFPGATVKHSCQSDGNSIYFHGNEGSEFNFATTRDVDLSTEDIQEQWSEEFESQPTGWDILGAVVGADCGTVESGLSLVFLKDGERKLCTPYMDTTGYGNLRFYFVMGGICDPGVSHENDIILYAKIEGRKEHIALDTLTYSSYKVPSLVSVVINPELQTPATKFCLRQKSHQGYNRNVWAVDFFHVLPVLPSTMSHMIQFSINLGCGTHQPGNSVSLEFSTNHGRSWSLLHTECLPEICAGPHLPHSTVYSSENYSGWNRITIPLPNAALTRDTRIRWRQTGPILGNMWAIDNVYIGPSCLKFCSGRGQCTRHGCKCDPGFSGPACEMASQTFPMFISESFGSARLSSYHNFYSIRGAEVSFGCGVLASGKALVFNKDGRRQLITSFLDSSQSRFLQFTLRLGSKSVLSTCRAPDQPGEGVLLHYSYDNGITWKLLEHYSYVNYHEPRIISVELPDDARQFGIQFRWWQPYHSSQGEDVWAIDEIVMTSVLFNSISLDFTNLVEVTQSLGFYLGNVQPYCGHDWTLCFTGDSKLASSMRYVETQSMQIGASYMIQFSLVMGCGQKYTPHMDNQVKLEYSANHGLTWHLVQEECLPSMPSCQEFTSASIYHASEFTQWRRVTVVLPQKTWSGATRFRWSQSYYTAQDEWALDNIYIGQQCPNMCSGHGSCDHGVCRCDQGYQGTECHPEAALPSTIMSDFENPSSWESDWQEVIGGEVVKPEQGCGVVSSGSSLYFSKAGKRQLVSWDLDTSWVDFVQFYIQIGGESAACNKPDSREEGILLQYSNNGGIQWHLLAEMYFSDFSKPRFVYLELPAAAKTPCTRFRWWQPVFSGEDYDQWAVDDIIILSEKQKQVIPVVNPTLPQNFYEKPAFDYPMNQMSVWLMLANEGMAKNDSFCATTPSAMVFGKSDGDRFAVTRDLTLKPGYVLQFKLNIGCTSQFSSTAPVLLQYSHDAGMSWFLVKEGCFPASAGKGCEGNSRELSEPTVYYTGDFEEWTRITIAIPRSLASSKTRFRWIQESSSQKNVPPFGLDGVYISEPCPSYCSGHGDCISGVCFCDLGYTAAQGTCVSNTPNHSEMFDRFEGKLSPLWYKITGGQVGTGCGTLNDGRSLYFNGLGKREARTVPLDTRNIRLVQFYIQIGSKTSGITCIKPRARNEGLVVQYSNDNGILWHLLRELDFMSFLEPQIISIDLPREAKTPATAFRWWQPQHGKHSAQWALDDVLIGVNDSSQTGFQDKFDGSIDLQANWYRIQGGQVDIDCLSMDTALIFTENIGKPRYAETWDFHVSASSFLQFEMNMGCSKPFSGAHGIQLQYSLNNGKDWQLVTEECVPPTIGCVHYTESSTYTSERFQNWRRVTVYLPLATNSPRTRFRWIQTNYTVGADSWAIDNVILASGCPWMCSGRGICDSGRCVCDRGFGGPFCVPVVPLPSILKDDFNGNLHPDLWPEVYGAERGNLNGETIKSGTCLIFKGEGLRMLISRDLDCTNTMYVQFSLRFIAKGTPERSHSILLQFSVSGGVTWHLMDEFYFPQTTSILFINVPLPYGAQTNATRFRLWQPYNNGKKEEIWIIDDFIIDGNNLNNPVLLLDTFDFGPREDNWFFYPGGNIGLYCPYSSKGAPEEDSAMVFVSNEVGEHSITTRDLSVNENTIIQFEINVGCSTDSSSADPVRLEFSRDFGATWHLLLPLCYHSSSLVSSLCSTEHHPSSTYYAGTTQGWRREVVHFGKLHLCGSVRFRWYQGFYPAGSQPVTWAIDNVYIGPQCEEMCYGHGSCINGTKCICDPGYSGPTCKISTKNPDFLKDDFEGQLESDRFLLMSGGKPSRKCGILSSGNNLFFNEDGLRMLVTRDLDLSHARFVQFFMRLGCGKGVPDPRSQPVLLQYSLNGGLSWSLLQEFLFSNSSNVGRYIALEMPLKARSGSTRLRWWQPSENGHFYSPWVIDQILIGGNISGNTVLEDDFSTLDSRKWLLHPGGTKMPVCGSTGDALVFIEKASTRYVVTTDIAVNEDSFLQIDFAASCSVTDSCYAIELEYSVDLGLSWHPLVRDCLPTNVECSRYHLQRILVSDTFNKWTRITLPLPSYTRSQATRFRWHQPAPFDKQQTWAIDNVYIGDGCLDMCSGHGRCVQGSCVCDEQWGGLYCDEPETSLPTQLKDNFNRAPSNQNWLTVSGGKLSTVCGAVASGLALHFSGGCSRLLVTVDLNLTNAEFIQFYFMYGCLITPSNRNQGVLLEYSVNGGITWNLLMEIFYDQYSKPGFVNILLPPDAKEIATRFRWWQPRHDGLDQNDWAIDNVLISGSADQRTVMLDTFSSAPVPQHERSPADAGPVGRIAFEMFLEDKTSVNENWLFHDDCTVERFCDSPDGVMLCGSHDGREVYAVTHDLTPTENWIMQFKISVGCKVPEKIAQNQIHVQFSTDFGVSWSYLVPQCLPADPKCSGSVSQPSVFFPTEGWKRITYPLPESLTGNPVRFRFYQKYSDVQWAIDNFYLGPGCLDNCGGHGDCLKEQCICDPGYSGPNCYLTHSLKTFLKERFDSEEIKPDLWMSLEGGSTCTECGVLAENTALYFGGSTVRQAITQDLDLRGAKFLQYWGRIGSENNMTSCHRPVCRKEGVLLDFSTDGGITWTLLHEMDFQKYISVRHDYILLPEGALTNTTRLRWWQPFVISNGLVVSGVERAQWALDNILIGGAEINPSQLVDTFDDEGSSHEENWSFYPNAVRTAGFCGNPSFHLYWPNKKKDKTHNALSSRELIIQPGYMMQFKIVVGCEATSCGDLHSVMLEYTKDARSDSWQLVQTQCLPSSSNSIGCSPFQFHEATIYNAVNSSSWKRITIQLPDHVSSSATQFRWIQKGEETEKQSWAIDHVYIGEACPKLCSGHGYCTTGAVCICDESFQGDDCSVFSHELPSYIKDNFESARVTEANWETIQGGVIGSGCGQLAPYAHGDSLYFNGCQIRQAATKPLDLTRASKIMFVLQIGSPAQTDSCNSDLSGPHTVDKAVLLQYSVNNGITWHVIAQHQPKDFTQAQRVSYNVPLEARMKGVLLRWWQPRHNGTGHDQWALDHVEVVLVSTRKQNYMMNFSRQHGLRHFYNRRRRSLRRYP.

The N-terminal stretch at 1 to 26 is a signal peptide; it reads MERGCWAPRALVLAVLLLLATLRARA. The Reelin domain occupies 27-191; sequence ATGYYPRFSP…GAPTEATAYS (165 aa). Cysteines 41 and 127 form a disulfide. The N-linked (GlcNAc...) asparagine glycan is linked to asparagine 141. Cysteine 155 and cysteine 179 are oxidised to a cystine. N-linked (GlcNAc...) asparagine glycans are attached at residues asparagine 258, asparagine 290, and asparagine 306. Residues cysteine 540 and cysteine 581 are joined by a disulfide bond. The stretch at 593–604 is one BNR 1 repeat; that stretch reads EFSTNHGRSWSL. A disulfide bridge connects residues cysteine 609 and cysteine 614. An N-linked (GlcNAc...) asparagine glycan is attached at asparagine 629. The EGF-like 1 domain maps to 671-702; the sequence is IGPSCLKFCSGRGQCTRHGCKCDPGFSGPACE. 2 disulfides stabilise this stretch: cysteine 675-cysteine 685 and cysteine 692-cysteine 701. Residues 799 to 810 form a BNR 2 repeat; that stretch reads HYSYDNGITWKL. A disulfide bridge links cysteine 895 with cysteine 937. Residues 952 to 963 form a BNR 3 repeat; the sequence is EYSANHGLTWHL. 3 disulfide bridges follow: cysteine 968-cysteine 975, cysteine 1034-cysteine 1044, and cysteine 1051-cysteine 1060. One can recognise an EGF-like 2 domain in the interval 1030 to 1061; sequence IGQQCPNMCSGHGSCDHGVCRCDQGYQGTECH. The BNR 4 repeat unit spans residues 1157-1168; that stretch reads QYSNNGGIQWHL. The N-linked (GlcNAc...) asparagine glycan is linked to asparagine 1267. Residues 1323-1334 form a BNR 5 repeat; it reads QYSHDAGMSWFL. Disulfide bonds link cysteine 1339/cysteine 1348, cysteine 1413/cysteine 1423, cysteine 1417/cysteine 1428, and cysteine 1430/cysteine 1441. Residues 1409–1442 form the EGF-like 3 domain; the sequence is ISEPCPSYCSGHGDCISGVCFCDLGYTAAQGTCV. Asparagine 1447 carries an N-linked (GlcNAc...) asparagine glycan. Cysteine 1475 and cysteine 1522 are oxidised to a cystine. The BNR 6 repeat unit spans residues 1535-1546; it reads QYSNDNGILWHL. N-linked (GlcNAc...) asparagine glycosylation is present at asparagine 1600. Cysteine 1633 and cysteine 1673 form a disulfide bridge. Residues 1686 to 1697 form a BNR 7 repeat; sequence QYSLNNGKDWQL. The cysteines at positions 1702 and 1709 are disulfide-linked. Asparagine 1750 carries N-linked (GlcNAc...) asparagine glycosylation. Positions 1765–1796 constitute an EGF-like 4 domain; sequence LASGCPWMCSGRGICDSGRCVCDRGFGGPFCV. The BNR 8 repeat unit spans residues 1884–1895; the sequence is QFSVSGGVTWHL. An N-linked (GlcNAc...) asparagine glycan is attached at asparagine 1921. Cysteine 1983 and cysteine 2030 are disulfide-bonded. One copy of the BNR 9 repeat lies at 2043–2054; that stretch reads EFSRDFGATWHL. An intrachain disulfide couples cysteine 2059 to cysteine 2070. Histidine 2061 and histidine 2074 together coordinate Zn(2+). The EGF-like 5 domain maps to 2129-2161; that stretch reads IGPQCEEMCYGHGSCINGTKCICDPGYSGPTCK. 3 disulfides stabilise this stretch: cysteine 2133-cysteine 2143, cysteine 2137-cysteine 2149, and cysteine 2151-cysteine 2160. Asparagine 2145 is a glycosylation site (N-linked (GlcNAc...) asparagine). A Zn(2+)-binding site is contributed by glutamate 2179. A disulfide bridge connects residues cysteine 2195 and cysteine 2235. One copy of the BNR 10 repeat lies at 2250-2261; it reads QYSLNGGLSWSL. Glutamate 2264 is a Zn(2+) binding site. Residues asparagine 2269 and asparagine 2317 are each glycosylated (N-linked (GlcNAc...) asparagine). 6 disulfides stabilise this stretch: cysteine 2348–cysteine 2387, cysteine 2393–cysteine 2559, cysteine 2482–cysteine 2492, cysteine 2486–cysteine 2497, cysteine 2499–cysteine 2508, and cysteine 2544–cysteine 2584. Positions 2397, 2399, and 2460 each coordinate Zn(2+). Residues 2399-2410 form a BNR 11 repeat; sequence EYSVDLGLSWHP. The EGF-like 6 domain occupies 2478 to 2509; that stretch reads IGDGCLDMCSGHGRCVQGSCVCDEQWGGLYCD. The N-linked (GlcNAc...) asparagine glycan is linked to asparagine 2569. BNR repeat units follow at residues 2598-2609 and 2778-2789; these read EYSVNGGITWNL and QFSTDFGVSWSY. Cysteine 2794 and cysteine 2801 form a disulfide bridge. The 32-residue stretch at 2853-2884 folds into the EGF-like 7 domain; it reads LGPGCLDNCGGHGDCLKEQCICDPGYSGPNCY. A disulfide bond links cysteine 2919 and cysteine 2966. Asparagine 2962 carries an N-linked (GlcNAc...) asparagine glycan. The stretch at 2979–2990 is one BNR 14 repeat; the sequence is DFSTDGGITWTL. N-linked (GlcNAc...) asparagine glycosylation is found at asparagine 3016 and asparagine 3073. The stretch at 3143–3155 is one BNR 15 repeat; it reads EYTKDARSDSWQL. Cysteine 3160 and cysteine 3170 are disulfide-bonded. Asparagine 3185 is a glycosylation site (N-linked (GlcNAc...) asparagine). The 33-residue stretch at 3228 to 3260 folds into the EGF-like 8 domain; that stretch reads IGEACPKLCSGHGYCTTGAVCICDESFQGDDCS. Disulfide bonds link cysteine 3232/cysteine 3242, cysteine 3236/cysteine 3248, cysteine 3250/cysteine 3259, and cysteine 3296/cysteine 3346. The stretch at 3363-3374 is one BNR 16 repeat; it reads QYSVNNGITWHV. 2 N-linked (GlcNAc...) asparagine glycosylation sites follow: asparagine 3412 and asparagine 3439.

It belongs to the reelin family. Oligomer of disulfide-linked homodimers. Post-translationally, N-glycosylated and to a lesser extent also O-glycosylated. In terms of tissue distribution, the major isoform 1 is neuron-specific. It is abundantly produced during brain ontogenesis by the Cajal-Retzius cells and other pioneer neurons located in the telencephalic marginal zone and by granule cells of the external granular layer of the cerebellum. Expression is located in deeper layers in the developing hippocampus and olfactory bulb, low levels of expression are also detected in the immature striatum. At early developmental stages, expressed also in hypothalamic differentiation fields, tectum and spinal cord. A moderate to low level of expression occurs in the septal area, striatal fields, habenular nuclei, some thalamic nuclei, particularly the lateral geniculate, the retina and some nuclei of the reticular formation in the central field of the medulla. Very low levels found in liver and kidney. No expression in radial glial cells, cortical plate, Purkinje cells and inferior olivary neurons. The minor isoform 2 is only expressed in non neuronal cells. The minor isoform 3 is found in the same cells as isoform 1, but is almost undetectable in retina and brain stem.

The protein localises to the secreted. It localises to the extracellular space. The protein resides in the extracellular matrix. In terms of biological role, extracellular matrix serine protease secreted by pioneer neurons that plays a role in layering of neurons in the cerebral cortex and cerebellum by coordinating cell positioning during neurodevelopment. Regulates microtubule function in neurons and neuronal migration. Binding to the extracellular domains of lipoprotein receptors VLDLR and LRP8/APOER2 induces tyrosine phosphorylation of DAB1 and modulation of TAU phosphorylation. Affects migration of sympathetic preganglionic neurons in the spinal cord, where it seems to act as a barrier to neuronal migration. Enzymatic activity is important for the modulation of cell adhesion. The sequence is that of Reelin (Reln) from Mus musculus (Mouse).